The following is a 375-amino-acid chain: INO80 complex subunit B (375 aa).

Positions 1–84 (MSACVPTVSS…GPTLQTPAKP (84 aa)) are disordered. Positions 50 to 68 (HGVHKKKHKKHKKKHKKKH) are enriched in basic residues. Residues Ser-114, Ser-116, Ser-144, Ser-147, and Ser-149 each carry the phosphoserine modification. 4 disordered regions span residues 143 to 165 (DSNLSPSPLRDLPGDLEGQEEEE), 201 to 220 (LQKARSQPSPTLPLPVGGGC), 262 to 287 (TAAPSGRGGRGAARGERRGGRAAAPA), and 312 to 331 (PTAVAQRPAPSGPAPRCSVP). Positions 230-262 (LLKREERARKRRLQAARRAEEHKNQTIERLTKT) form a coiled coil. The HIT-type zinc-finger motif lies at 324-355 (PAPRCSVPGCPHPRRYACSRTGQALCSLQCYR).

Component of the chromatin remodeling INO80 complex; specifically part of a complex module associated with the helicase ATP-binding and the helicase C-terminal domain of INO80. Interacts with RP9. As to expression, expressed strongly in the testis and moderately in the kidney, skeletal muscle, liver and lung.

The protein localises to the nucleus. Its subcellular location is the nucleolus. Functionally, proposed core component of the chromatin remodeling INO80 complex which is involved in transcriptional regulation, DNA replication and probably DNA repair. The protein is INO80 complex subunit B (Ino80b) of Mus musculus (Mouse).